The primary structure comprises 617 residues: Chaperone protein HscA homolog (617 aa).

This sequence belongs to the heat shock protein 70 family.

Its function is as follows. Probable chaperone. Has a low intrinsic ATPase activity which is markedly stimulated by HscB. The sequence is that of Chaperone protein HscA homolog from Vibrio parahaemolyticus serotype O3:K6 (strain RIMD 2210633).